Consider the following 211-residue polypeptide: NADH-quinone oxidoreductase subunit I (211 aa).

4Fe-4S ferredoxin-type domains lie at 90–119 (RLWE…IDTK) and 129–158 (TEYS…HGGE). Residues Cys-99, Cys-102, Cys-105, Cys-109, Cys-138, Cys-141, Cys-144, and Cys-148 each contribute to the [4Fe-4S] cluster site.

It belongs to the complex I 23 kDa subunit family. NDH-1 is composed of 14 different subunits. Subunits NuoA, H, J, K, L, M, N constitute the membrane sector of the complex. Requires [4Fe-4S] cluster as cofactor.

The protein localises to the cell inner membrane. The enzyme catalyses a quinone + NADH + 5 H(+)(in) = a quinol + NAD(+) + 4 H(+)(out). In terms of biological role, NDH-1 shuttles electrons from NADH, via FMN and iron-sulfur (Fe-S) centers, to quinones in the respiratory chain. The immediate electron acceptor for the enzyme in this species is believed to be ubiquinone. Couples the redox reaction to proton translocation (for every two electrons transferred, four hydrogen ions are translocated across the cytoplasmic membrane), and thus conserves the redox energy in a proton gradient. The chain is NADH-quinone oxidoreductase subunit I from Sulfurimonas denitrificans (strain ATCC 33889 / DSM 1251) (Thiomicrospira denitrificans (strain ATCC 33889 / DSM 1251)).